A 231-amino-acid polypeptide reads, in one-letter code: MKVCNMQKGTLPVSRHHAYDGVVIKRIEKELCKTIKDRDTESKKKAICVIKEATKKAESLRIDAVCDGYQIGIQTAFEHIIDYICEWKLKQNENRRNIEDYITSLLSENLHDERIISTLLEQWLSSLRNTVTELKVVLPKCNLALRKKLELDLHKYRSDVKIILKYSEGNNYIFCSGNQVVEFSPQDVISGVKIELAEKLTKNDKKYFKELAHKKLRQIAEDLLKENPVND.

In terms of assembly, the core secretion machinery of the T3SS is composed of approximately 20 different proteins, including cytoplasmic components, a base, an export apparatus and a needle. This subunit is part of the cytosolic complex. Interacts directly with Spa47/SctN (T3SS ATPase) and Spa33/SctQ (the major sorting platform component). Homodimer in solution.

The protein resides in the cytoplasm. Component of the type III secretion system (T3SS), also called injectisome, which is used to inject bacterial effector proteins into eukaryotic host cells. Acts as a regulator of the Spa47/SctN ATPase activity. It down-regulates the ATPase activity of the oligomeric Spa47/SctN, while it up-regulates the activity of the monomeric form. Important for translocation of MxiH/SctF, the major needle component. The sequence is that of Type 3 secretion system stator protein from Shigella flexneri.